A 383-amino-acid polypeptide reads, in one-letter code: Succinyl-diaminopimelate desuccinylase (383 aa).

Histidine 79 is a Zn(2+) binding site. Residue aspartate 81 is part of the active site. Aspartate 110 is a Zn(2+) binding site. Glutamate 141 acts as the Proton acceptor in catalysis. The Zn(2+) site is built by glutamate 142, glutamate 170, and histidine 355.

Belongs to the peptidase M20A family. DapE subfamily. As to quaternary structure, homodimer. It depends on Zn(2+) as a cofactor. Co(2+) is required as a cofactor.

It carries out the reaction N-succinyl-(2S,6S)-2,6-diaminopimelate + H2O = (2S,6S)-2,6-diaminopimelate + succinate. It participates in amino-acid biosynthesis; L-lysine biosynthesis via DAP pathway; LL-2,6-diaminopimelate from (S)-tetrahydrodipicolinate (succinylase route): step 3/3. Functionally, catalyzes the hydrolysis of N-succinyl-L,L-diaminopimelic acid (SDAP), forming succinate and LL-2,6-diaminopimelate (DAP), an intermediate involved in the bacterial biosynthesis of lysine and meso-diaminopimelic acid, an essential component of bacterial cell walls. In Helicobacter pylori (strain ATCC 700392 / 26695) (Campylobacter pylori), this protein is Succinyl-diaminopimelate desuccinylase.